The following is a 263-amino-acid chain: MVLKSVFRSTVLGLRTWSVFSVARQSKTTLPAFSQAQCSSYTNWTFSRHFKGDETLLNQPVRQYARPSRKKQEFPSQLEDLKTSMLKHEYASVPLAQSVDDVVKKLLTLEFANHSEKLRLKEEQLIAKVQRDENDRSSTEVKVAILTARIRNFQEHLHKHPKDKANKRWMLMTIDKRKKLLKFLRRTRYDSFEKVCKELGITYTFPPEYYRRVTRRWLAKKAFCNKVFKEVQRLKAAEREKQKAEEAERKKSSSSTNPQETAA.

A mitochondrion-targeting transit peptide spans 1–70 (MVLKSVFRST…VRQYARPSRK (70 aa)). Over residues 238 to 251 (EREKQKAEEAERKK) the composition is skewed to basic and acidic residues. The interval 238–263 (EREKQKAEEAERKKSSSSTNPQETAA) is disordered.

This sequence belongs to the universal ribosomal protein uS15 family. In terms of assembly, component of the mitochondrial ribosome small subunit (28S) which comprises a 12S rRNA and about 30 distinct proteins.

Its subcellular location is the mitochondrion. This is Small ribosomal subunit protein uS15m (mrps15) from Danio rerio (Zebrafish).